A 448-amino-acid chain; its full sequence is UDP-N-acetylmuramoylalanine--D-glutamate ligase (448 aa).

Residue 112-118 (GSNAKST) coordinates ATP.

It belongs to the MurCDEF family.

It is found in the cytoplasm. It catalyses the reaction UDP-N-acetyl-alpha-D-muramoyl-L-alanine + D-glutamate + ATP = UDP-N-acetyl-alpha-D-muramoyl-L-alanyl-D-glutamate + ADP + phosphate + H(+). It participates in cell wall biogenesis; peptidoglycan biosynthesis. Its function is as follows. Cell wall formation. Catalyzes the addition of glutamate to the nucleotide precursor UDP-N-acetylmuramoyl-L-alanine (UMA). In Acinetobacter baumannii (strain ATCC 17978 / DSM 105126 / CIP 53.77 / LMG 1025 / NCDC KC755 / 5377), this protein is UDP-N-acetylmuramoylalanine--D-glutamate ligase.